The primary structure comprises 671 residues: Probable potassium transport system protein Kup 2 (671 aa).

Transmembrane regions (helical) follow at residues G18–M38, V60–L80, W103–P123, V149–V169, F173–F193, A218–S238, W252–A272, M292–I312, L343–F363, Y373–I393, I402–V422, and F424–I444.

Belongs to the HAK/KUP transporter (TC 2.A.72) family.

It localises to the cell membrane. It carries out the reaction K(+)(in) + H(+)(in) = K(+)(out) + H(+)(out). In terms of biological role, transport of potassium into the cell. Likely operates as a K(+):H(+) symporter. The polypeptide is Probable potassium transport system protein Kup 2 (Lactococcus lactis subsp. cremoris (strain MG1363)).